A 417-amino-acid chain; its full sequence is Phosphoglycerate kinase 2 (417 aa).

Serine 2 is modified (N-acetylserine). 2 positions are modified to phosphoserine: serine 2 and serine 4. Lysine 11 carries the post-translational modification N6-acetyllysine. Residues valine 23, aspartate 24, phenylalanine 25, asparagine 26, glutamine 38, and arginine 39 each contribute to the (2R)-3-phosphoglycerate site. Position 48 is an N6-acetyllysine (lysine 48). The (2R)-3-phosphoglycerate site is built by serine 62, histidine 63, glycine 65, and arginine 66. An N6-acetyllysine mark is found at lysine 75, lysine 86, and lysine 97. (2R)-3-phosphoglycerate contacts are provided by leucine 122 and arginine 123. N6-acetyllysine occurs at positions 131 and 146. Residues histidine 170 and arginine 171 each contribute to the (2R)-3-phosphoglycerate site. Phosphotyrosine is present on tyrosine 196. Lysine 199 bears the N6-acetyllysine mark. Residue glycine 214 participates in ADP binding. Residue glycine 214 participates in CDP binding. Residues alanine 215 and lysine 216 each contribute to the AMP site. ATP is bound at residue alanine 215. Mg(2+) is bound at residue alanine 215. Mg(2+) is bound by residues alanine 218 and aspartate 219. Residue aspartate 219 coordinates CDP. Position 220 (lysine 220) interacts with AMP. ATP is bound at residue lysine 220. An ADP-binding site is contributed by glycine 238. Glycine 238 serves as a coordination point for CDP. Glycine 239 is an AMP binding site. Residue glycine 239 participates in ATP binding. 2 positions are modified to N6-acetyllysine: lysine 267 and lysine 291. Glycine 313 contacts AMP. ATP is bound at residue glycine 313. CDP is bound by residues glycine 338 and phenylalanine 343. Phenylalanine 343 provides a ligand contact to ADP. Glutamate 344 provides a ligand contact to AMP. ATP contacts are provided by glutamate 344, aspartate 375, and threonine 376. Aspartate 375 contributes to the Mg(2+) binding site.

It belongs to the phosphoglycerate kinase family. As to quaternary structure, monomer. Requires Mg(2+) as cofactor. Mainly found in round spermatids. Localized on the principle piece in the sperm (at protein level). Testis-specific. Expression significantly decreased in the testis of elderly men.

It is found in the cytoplasm. The catalysed reaction is (2R)-3-phosphoglycerate + ATP = (2R)-3-phospho-glyceroyl phosphate + ADP. It participates in carbohydrate degradation; glycolysis; pyruvate from D-glyceraldehyde 3-phosphate: step 2/5. Its function is as follows. Essential for sperm motility and male fertility. Not required for the completion of spermatogenesis. The protein is Phosphoglycerate kinase 2 (PGK2) of Homo sapiens (Human).